Consider the following 476-residue polypeptide: Angiotensinogen (476 aa).

Positions 1-24 are cleaved as a signal peptide; it reads MAPAGLSLGAAILCLLAWAGLAAG. A disulfide bridge links C42 with C161. N-linked (GlcNAc...) asparagine glycans are attached at residues N295, N319, N362, and N401.

It belongs to the serpin family. Post-translationally, in response to low blood pressure, the enzyme renin/REN cleaves angiotensinogen to produce angiotensin-1. Angiotensin-1 is a substrate of ACE (angiotensin converting enzyme) that removes a dipeptide to yield the physiologically active peptide angiotensin-2. Angiotensin-1 and angiotensin-2 can be further processed to generate angiotensin-3, angiotensin-4. Angiotensin 1-9 is cleaved from angiotensin-1 by ACE2 and can be further processed by ACE to produce angiotensin 1-7, angiotensin 1-5 and angiotensin 1-4. Angiotensin 1-7 has also been proposed to be cleaved from angiotensin-2 by ACE2 or from angiotensin-1 by MME (neprilysin). The disulfide bond is labile. Angiotensinogen is present in the circulation in a near 40:60 ratio with the oxidized disulfide-bonded form, which preferentially interacts with receptor-bound renin.

Its subcellular location is the secreted. Its function is as follows. Essential component of the renin-angiotensin system (RAS), a potent regulator of blood pressure, body fluid and electrolyte homeostasis. Functionally, acts directly on vascular smooth muscle as a potent vasoconstrictor, affects cardiac contractility and heart rate through its action on the sympathetic nervous system, and alters renal sodium and water absorption through its ability to stimulate the zona glomerulosa cells of the adrenal cortex to synthesize and secrete aldosterone. Acts by binding to angiotensin receptors AGTR1 and AGTR2. Also binds the DEAR/FBXW7-AS1 receptor. In terms of biological role, stimulates aldosterone release. Is a ligand for the G-protein coupled receptor MAS1. Has vasodilator and antidiuretic effects. Has an antithrombotic effect that involves MAS1-mediated release of nitric oxide from platelets. The sequence is that of Angiotensinogen (AGT) from Bos taurus (Bovine).